The primary structure comprises 231 residues: Hypoxanthine-guanine-xanthine phosphoribosyltransferase (231 aa).

GMP-binding positions include lysine 77, 144–152 (EDIIDTGKT), lysine 176, and aspartate 204. Residue aspartate 148 is the Proton acceptor of the active site. Aspartate 204 contributes to the Mg(2+) binding site.

Belongs to the purine/pyrimidine phosphoribosyltransferase family. As to quaternary structure, homotetramer. Mg(2+) is required as a cofactor.

Its subcellular location is the cytoplasm. It carries out the reaction IMP + diphosphate = hypoxanthine + 5-phospho-alpha-D-ribose 1-diphosphate. It catalyses the reaction GMP + diphosphate = guanine + 5-phospho-alpha-D-ribose 1-diphosphate. The catalysed reaction is XMP + diphosphate = xanthine + 5-phospho-alpha-D-ribose 1-diphosphate. It participates in purine metabolism; GMP biosynthesis via salvage pathway; GMP from guanine: step 1/1. Its pathway is purine metabolism; IMP biosynthesis via salvage pathway; IMP from hypoxanthine: step 1/1. It functions in the pathway purine metabolism; XMP biosynthesis via salvage pathway; XMP from xanthine: step 1/1. Catalyzes the transfer of a ribosyl phosphate group from 5-phosphoribose 1-diphosphate to the N(9) of hypoxanthine, guanine or xanthine, leading to IMP, GMP and XMP, respectively. Plays a central role in the generation of purine nucleotides through the purine salvage pathway. The polypeptide is Hypoxanthine-guanine-xanthine phosphoribosyltransferase (LACZ) (Plasmodium falciparum (isolate K1 / Thailand)).